Here is a 200-residue protein sequence, read N- to C-terminus: Dual-action ribosomal maturation protein DarP (200 aa).

2 disordered regions span residues 1 to 25 and 177 to 200; these read MTRKTRIQPIEHAAEVDDNGYDRPS and TASGTPGGDDEAADEAGDDHDDEA. A compositionally biased stretch (basic and acidic residues) spans 12 to 25; sequence HAAEVDDNGYDRPS. The span at 184-200 shows a compositional bias: acidic residues; the sequence is GDDEAADEAGDDHDDEA.

It belongs to the DarP family.

The protein localises to the cytoplasm. Functionally, member of a network of 50S ribosomal subunit biogenesis factors which assembles along the 30S-50S interface, preventing incorrect 23S rRNA structures from forming. Promotes peptidyl transferase center (PTC) maturation. This Burkholderia ambifaria (strain MC40-6) protein is Dual-action ribosomal maturation protein DarP.